Consider the following 400-residue polypeptide: Probable phospho-2-dehydro-3-deoxyheptonate aldolase (400 aa).

Belongs to the class-II DAHP synthase family.

The catalysed reaction is D-erythrose 4-phosphate + phosphoenolpyruvate + H2O = 7-phospho-2-dehydro-3-deoxy-D-arabino-heptonate + phosphate. It participates in antibiotic biosynthesis; phenazine biosynthesis. The protein is Probable phospho-2-dehydro-3-deoxyheptonate aldolase (phzC) of Pseudomonas fluorescens.